A 111-amino-acid polypeptide reads, in one-letter code: uncharacterized protein (111 aa).

It to A.fulgidus AF1864.

This is an uncharacterized protein from Aquifex aeolicus (strain VF5).